The following is a 182-amino-acid chain: P21 prophage-derived terminase small subunit (182 aa).

31–36 (SKGSKG) is an ATP binding site.

It belongs to the terminase small subunit family. Heterooligomer of gp1 and gp2.

Functionally, involved in the initiation of the phage DNA packaging into the prohead. Processes replicating concatemeric DNA into pieces of unit length with cohesive ends. In Escherichia coli O6:H1 (strain CFT073 / ATCC 700928 / UPEC), this protein is P21 prophage-derived terminase small subunit (nohA).